A 103-amino-acid chain; its full sequence is Cobalt transport protein CbiN (103 aa).

2 helical membrane-spanning segments follow: residues 6–26 and 68–88; these read VLTN…PFFV and LLFA…LGYL.

The protein belongs to the CbiN family. Forms an energy-coupling factor (ECF) transporter complex composed of an ATP-binding protein (A component, CbiO), a transmembrane protein (T component, CbiQ) and 2 possible substrate-capture proteins (S components, CbiM and CbiN) of unknown stoichimetry.

The protein localises to the cell membrane. It participates in cofactor biosynthesis; adenosylcobalamin biosynthesis. In terms of biological role, part of the energy-coupling factor (ECF) transporter complex CbiMNOQ involved in cobalt import. The chain is Cobalt transport protein CbiN from Clostridium perfringens (strain 13 / Type A).